Consider the following 182-residue polypeptide: Segregation and condensation protein B (182 aa).

This sequence belongs to the ScpB family. In terms of assembly, homodimer. Homodimerization may be required to stabilize the binding of ScpA to the Smc head domains. Component of a cohesin-like complex composed of ScpA, ScpB and the Smc homodimer, in which ScpA and ScpB bind to the head domain of Smc. The presence of the three proteins is required for the association of the complex with DNA.

It localises to the cytoplasm. Participates in chromosomal partition during cell division. May act via the formation of a condensin-like complex containing Smc and ScpA that pull DNA away from mid-cell into both cell halves. The chain is Segregation and condensation protein B from Staphylococcus saprophyticus subsp. saprophyticus (strain ATCC 15305 / DSM 20229 / NCIMB 8711 / NCTC 7292 / S-41).